A 227-amino-acid chain; its full sequence is ATP-dependent dethiobiotin synthetase BioD (227 aa).

13–18 (DIGKTY) provides a ligand contact to ATP. Residue Thr-17 participates in Mg(2+) binding. Lys-38 is a catalytic residue. Ser-42 provides a ligand contact to substrate. ATP contacts are provided by residues Asp-55, 116 to 119 (EGSG), and 179 to 180 (NN). Asp-55 and Glu-116 together coordinate Mg(2+).

Belongs to the dethiobiotin synthetase family. In terms of assembly, homodimer. Mg(2+) is required as a cofactor.

It localises to the cytoplasm. It carries out the reaction (7R,8S)-7,8-diammoniononanoate + CO2 + ATP = (4R,5S)-dethiobiotin + ADP + phosphate + 3 H(+). It participates in cofactor biosynthesis; biotin biosynthesis; biotin from 7,8-diaminononanoate: step 1/2. Functionally, catalyzes a mechanistically unusual reaction, the ATP-dependent insertion of CO2 between the N7 and N8 nitrogen atoms of 7,8-diaminopelargonic acid (DAPA, also called 7,8-diammoniononanoate) to form a ureido ring. The chain is ATP-dependent dethiobiotin synthetase BioD from Clostridium botulinum (strain Langeland / NCTC 10281 / Type F).